A 242-amino-acid polypeptide reads, in one-letter code: RxLR effector protein PexRD15 (242 aa).

The signal sequence occupies residues 1–24; it reads MMKSLYAVNLVLLLLLAFFAPAPA. The short motif at 48–66 is the RxLR-dEER element; that stretch reads RLLRAHSSDKEEQKEEEER.

The protein belongs to the RxLR effector family.

The protein resides in the secreted. Its subcellular location is the host cell membrane. Functionally, effector that enhances P.infestans colonization of Nicotiana benthamiana leaves. The chain is RxLR effector protein PexRD15 from Phytophthora infestans (strain T30-4) (Potato late blight agent).